Consider the following 660-residue polypeptide: tRNA 5-methylaminomethyl-2-thiouridine biosynthesis bifunctional protein MnmC (660 aa).

The interval 1–242 (MTDRIVPATL…KRAMLVGEFA (242 aa)) is tRNA (mnm(5)s(2)U34)-methyltransferase. Residues 266–660 (IGAGLAGCAV…VRALRHGRVA (395 aa)) are FAD-dependent cmnm(5)s(2)U34 oxidoreductase.

The protein in the N-terminal section; belongs to the methyltransferase superfamily. tRNA (mnm(5)s(2)U34)-methyltransferase family. It in the C-terminal section; belongs to the DAO family. FAD serves as cofactor.

The protein localises to the cytoplasm. It catalyses the reaction 5-aminomethyl-2-thiouridine(34) in tRNA + S-adenosyl-L-methionine = 5-methylaminomethyl-2-thiouridine(34) in tRNA + S-adenosyl-L-homocysteine + H(+). Its function is as follows. Catalyzes the last two steps in the biosynthesis of 5-methylaminomethyl-2-thiouridine (mnm(5)s(2)U) at the wobble position (U34) in tRNA. Catalyzes the FAD-dependent demodification of cmnm(5)s(2)U34 to nm(5)s(2)U34, followed by the transfer of a methyl group from S-adenosyl-L-methionine to nm(5)s(2)U34, to form mnm(5)s(2)U34. The sequence is that of tRNA 5-methylaminomethyl-2-thiouridine biosynthesis bifunctional protein MnmC from Burkholderia pseudomallei (strain 1106a).